The chain runs to 145 residues: uncharacterized protein (145 aa).

A signal peptide spans 1 to 23; the sequence is MSSSNLSSRKTRISAHFLDAAPA. A helical transmembrane segment spans residues 123-140; the sequence is VLLLIIALVFLLFVAIFI.

The protein localises to the membrane. This is an uncharacterized protein from Archaeoglobus fulgidus (strain ATCC 49558 / DSM 4304 / JCM 9628 / NBRC 100126 / VC-16).